Consider the following 156-residue polypeptide: Cytochrome c-type biogenesis protein CcmE 2 (156 aa).

Residues 1 to 8 are Cytoplasmic-facing; that stretch reads MNPQRRRR. The helical; Signal-anchor for type II membrane protein transmembrane segment at 9 to 29 threads the bilayer; it reads LWLVLALVLAGGLATTLVAMA. The Periplasmic segment spans residues 30–156; that stretch reads LQRNVAYLYT…AAAGQVGERQ (127 aa). Residues histidine 123 and tyrosine 127 each coordinate heme. Residues 136-156 form a disordered region; the sequence is MGSAHRKHDVPAAAGQVGERQ.

This sequence belongs to the CcmE/CycJ family.

The protein resides in the cell inner membrane. Its function is as follows. Heme chaperone required for the biogenesis of c-type cytochromes. Transiently binds heme delivered by CcmC and transfers the heme to apo-cytochromes in a process facilitated by CcmF and CcmH. This chain is Cytochrome c-type biogenesis protein CcmE 2, found in Xanthomonas axonopodis pv. citri (strain 306).